The sequence spans 238 residues: Ribosomal RNA small subunit methyltransferase G (238 aa).

Residues glycine 77, phenylalanine 82, 128-129 (AE), and arginine 147 contribute to the S-adenosyl-L-methionine site.

The protein belongs to the methyltransferase superfamily. RNA methyltransferase RsmG family.

The protein resides in the cytoplasm. Its function is as follows. Specifically methylates the N7 position of guanine in position 535 of 16S rRNA. This Listeria welshimeri serovar 6b (strain ATCC 35897 / DSM 20650 / CCUG 15529 / CIP 8149 / NCTC 11857 / SLCC 5334 / V8) protein is Ribosomal RNA small subunit methyltransferase G.